The following is a 982-amino-acid chain: Pentatricopeptide repeat-containing protein At5g62370 (982 aa).

PPR repeat units follow at residues 94 to 129 (DSSCYGALIRKLTEMGQPGVAETFYNQRVIGNGIVP), 130 to 164 (DSSVLDSMVFCLVKLRRFDEARAHLDRIIASGYAP), 165 to 199 (SRNSSSLVVDELCNQDRFLEAFHCFEQVKERGSGL), 200 to 234 (WLWCCKRLFKGLCGHGHLNEAIGMLDTLCGMTRMP), 236 to 270 (PVNLYKSLFYCFCKRGCAAEAEALFDHMEVDGYYV), 271 to 305 (DKVMYTCLMKEYCKDNNMTMAMRLYLRMVERSFEL), 306 to 340 (DPCIFNTLIHGFMKLGMLDKGRVMFSQMIKKGVQS), 341 to 376 (NVFTYHIMIGSYCKEGNVDYALRLFVNNTGSEDISR), 377 to 411 (NVHCYTNLIFGFYKKGGMDKAVDLLMRMLDNGIVP), 412 to 446 (DHITYFVLLKMLPKCHELKYAMVILQSILDNGCGI), 476 to 510 (AAVGLAVVTTALCSQRNYIAALSRIEKMVNLGCTP), 511 to 545 (LPFSYNSVIKCLFQENIIEDLASLVNIIQELDFVP), 546 to 580 (DVDTYLIVVNELCKKNDRDAAFAIIDAMEELGLRP), 581 to 615 (TVAIYSSIIGSLGKQGRVVEAEETFAKMLESGIQP), 616 to 650 (DEIAYMIMINTYARNGRIDEANELVEEVVKHFLRP), 651 to 685 (SSFTYTVLISGFVKMGMMEKGCQYLDKMLEDGLSP), 686 to 720 (NVVLYTALIGHFLKKGDFKFSFTLFGLMGENDIKH), 721 to 755 (DHIAYITLLSGLWRAMARKKKRQVIVEPGKEKLLQ), 759 to 789 (RTKPLVSIPSSLGNYGSKSFAMEVIGKVKKS), 793 to 827 (NLYLHNTIITGYCAAGRLDEAYNHLESMQKEGIVP), 828 to 858 (NLVTYTILMKSHIEAGDIESAIDLFEGTNCE), 860 to 894 (DQVMYSTLLKGLCDFKRPLDALALMLEMQKSGINP), 895 to 929 (NKDSYEKLLQCLCYSRLTMEAVKVVKDMAALDIWP), and 930 to 964 (RSINHTWLIYILCEEKKLREARALFAIMVQSGRSL).

Belongs to the PPR family. P subfamily.

The polypeptide is Pentatricopeptide repeat-containing protein At5g62370 (Arabidopsis thaliana (Mouse-ear cress)).